The sequence spans 913 residues: Polyribonucleotide nucleotidyltransferase (913 aa).

The segment at 407–427 (YMHNYEMPPYSTGETGRVGSP) is disordered. Positions 521 and 527 each coordinate Mg(2+). A KH domain is found at 587 to 646 (PRIITTSVPVEKIGEVIGPKGKMINQIQEDTGAEIAIEDDGTVFISSEGGEAAEKAKAII). Residues 658–730 (GETYNGKVVK…DRGKISLAIP (73 aa)) enclose the S1 motif domain. The disordered stretch occupies residues 727 to 913 (LAIPGFEDQE…VRRDFDPFED (187 aa)). Composition is skewed to basic and acidic residues over residues 742-789 (SRGD…RRSD), 797-865 (DRPR…DRRG), and 872-898 (RGSDRNPRYATDDNYDDYRADREERTE).

It belongs to the polyribonucleotide nucleotidyltransferase family. It depends on Mg(2+) as a cofactor.

It localises to the cytoplasm. The catalysed reaction is RNA(n+1) + phosphate = RNA(n) + a ribonucleoside 5'-diphosphate. In terms of biological role, involved in mRNA degradation. Catalyzes the phosphorolysis of single-stranded polyribonucleotides processively in the 3'- to 5'-direction. The protein is Polyribonucleotide nucleotidyltransferase of Bifidobacterium longum (strain DJO10A).